Consider the following 453-residue polypeptide: Tubulin alpha-2 chain (453 aa).

GTP is bound at residue Gln-11. Position 40 is an N6-acetyllysine (Lys-40). GTP-binding residues include Glu-71, Gly-144, Thr-145, Thr-179, Asn-206, and Asn-228. Glu-71 serves as a coordination point for Mg(2+). Glu-254 is an active-site residue. The tract at residues 432-453 (YEEVGAETAEGEGEEEDFGEEY) is disordered.

Belongs to the tubulin family. In terms of assembly, dimer of alpha and beta chains. A typical microtubule is a hollow water-filled tube with an outer diameter of 25 nm and an inner diameter of 15 nM. Alpha-beta heterodimers associate head-to-tail to form protofilaments running lengthwise along the microtubule wall with the beta-tubulin subunit facing the microtubule plus end conferring a structural polarity. Microtubules usually have 13 protofilaments but different protofilament numbers can be found in some organisms and specialized cells. Mg(2+) is required as a cofactor. Post-translationally, undergoes a tyrosination/detyrosination cycle, the cyclic removal and re-addition of a C-terminal tyrosine residue by the enzymes tubulin tyrosine carboxypeptidase (TTCP) and tubulin tyrosine ligase (TTL), respectively. In terms of processing, acetylation of alpha chains at Lys-40 stabilizes microtubules and affects affinity and processivity of microtubule motors. This modification has a role in multiple cellular functions, ranging from cell motility, cell cycle progression or cell differentiation to intracellular trafficking and signaling.

The protein resides in the cytoplasm. It localises to the cytoskeleton. It catalyses the reaction GTP + H2O = GDP + phosphate + H(+). Tubulin is the major constituent of microtubules, a cylinder consisting of laterally associated linear protofilaments composed of alpha- and beta-tubulin heterodimers. Microtubules grow by the addition of GTP-tubulin dimers to the microtubule end, where a stabilizing cap forms. Below the cap, tubulin dimers are in GDP-bound state, owing to GTPase activity of alpha-tubulin. This is Tubulin alpha-2 chain (TUBA2) from Pelvetia fastigiata (Brown alga).